We begin with the raw amino-acid sequence, 193 residues long: UPF0301 protein SCO2948 (193 aa).

It belongs to the UPF0301 (AlgH) family.

This Streptomyces coelicolor (strain ATCC BAA-471 / A3(2) / M145) protein is UPF0301 protein SCO2948.